Reading from the N-terminus, the 62-residue chain is Large ribosomal subunit protein bL28 (62 aa).

The segment at 1–23 is disordered; the sequence is MARRCFVTGKSAKAGNARSHSMR.

Belongs to the bacterial ribosomal protein bL28 family.

The chain is Large ribosomal subunit protein bL28 from Brevibacillus brevis (strain 47 / JCM 6285 / NBRC 100599).